Reading from the N-terminus, the 241-residue chain is Accessory protein p30II (241 aa).

Short sequence motifs (nuclear localization signal) lie at residues 73 to 78 (RRCRSR) and 91 to 98 (GPRRSRPR). The tract at residues 86–153 (AFPPGGPRRS…HRNSPTDTKL (68 aa)) is disordered. Residues 107 to 138 (PSSTVSSSSLSFNSSSKDNSPSTNSSTSRSSG) show a composition bias toward low complexity. The short motif at 175–184 (LRVWRLCTRR) is the Mitochondrial targeting signal element.

Belongs to the HTLV-1 accessory protein p30II family. P30II binds to the KIX domains of CREBBP and EP300.

It is found in the host nucleus. It localises to the host nucleolus. The protein resides in the host mitochondrion inner membrane. Functionally, p30II is a multifunctional regulator that sequesters EP300/CREBBP and down-regulates CREB-responsive element (CRE) and Tax-responsive element (TRE) mediated transcription. Specifically binds and represses tax/rex mRNA nuclear export. Since Tax and Rex are positive regulators of viral gene expression, their inhibition by p30II reduces virion production, and allows the virus to escape the host immune surveillance and persist latently in an immune-competent host. Its function is as follows. p13II increases mitochondrial permeability to monovalent cations, producing a rapid, membrane potential-dependent influx of potassium. This could involve a channel-forming activity. Interferes with cell proliferation and transformation and promotes apoptosis induced by ceramide and Fas ligand, probably using the Ras signaling. The protein is Accessory protein p30II of Human T-cell leukemia virus 1 (isolate Caribbea HS-35 subtype A) (HTLV-1).